The sequence spans 153 residues: Aspartate carbamoyltransferase regulatory chain (153 aa).

Zn(2+) contacts are provided by Cys109, Cys114, Cys138, and Cys141.

This sequence belongs to the PyrI family. As to quaternary structure, contains catalytic and regulatory chains. It depends on Zn(2+) as a cofactor.

In terms of biological role, involved in allosteric regulation of aspartate carbamoyltransferase. The polypeptide is Aspartate carbamoyltransferase regulatory chain (Wigglesworthia glossinidia brevipalpis).